A 196-amino-acid polypeptide reads, in one-letter code: UPF0340 protein TT_C0214 (196 aa).

It belongs to the UPF0340 family.

The chain is UPF0340 protein TT_C0214 from Thermus thermophilus (strain ATCC BAA-163 / DSM 7039 / HB27).